A 467-amino-acid chain; its full sequence is tRNA-2-methylthio-N(6)-dimethylallyladenosine synthase (467 aa).

The segment at 1–20 (MSDDTTQIEPAMAQETSPRA) is disordered. The MTTase N-terminal domain occupies 23–143 (RKVFVKTYGC…LPNALARVRG (121 aa)). Cysteine 32, cysteine 68, cysteine 106, cysteine 184, cysteine 188, and cysteine 191 together coordinate [4Fe-4S] cluster. The 233-residue stretch at 170-402 (RKRGVSAFLT…QALLSAQQYA (233 aa)) folds into the Radical SAM core domain. The region spanning 405-467 (DSMIGRKMDV…TNSLIAQKLA (63 aa)) is the TRAM domain.

Belongs to the methylthiotransferase family. MiaB subfamily. As to quaternary structure, monomer. The cofactor is [4Fe-4S] cluster.

The protein resides in the cytoplasm. The catalysed reaction is N(6)-dimethylallyladenosine(37) in tRNA + (sulfur carrier)-SH + AH2 + 2 S-adenosyl-L-methionine = 2-methylsulfanyl-N(6)-dimethylallyladenosine(37) in tRNA + (sulfur carrier)-H + 5'-deoxyadenosine + L-methionine + A + S-adenosyl-L-homocysteine + 2 H(+). In terms of biological role, catalyzes the methylthiolation of N6-(dimethylallyl)adenosine (i(6)A), leading to the formation of 2-methylthio-N6-(dimethylallyl)adenosine (ms(2)i(6)A) at position 37 in tRNAs that read codons beginning with uridine. This is tRNA-2-methylthio-N(6)-dimethylallyladenosine synthase from Brucella abortus (strain S19).